The sequence spans 756 residues: 1-phosphatidylinositol 4,5-bisphosphate phosphodiesterase delta-1 (756 aa).

Residues 21–130 (ALLKGSQLLK…WVLGLHKIIH (110 aa)) form the PH domain. The substrate binding stretch occupies residues 30–57 (KVKSSSWRRERFYKLQEDCKTIWQESRK). 2 consecutive EF-hand domains span residues 140–175 (KLQHWIHSCLRKADKNKDNKMSFKELQNFLKELNIQ) and 176–211 (VDDSYARKIFRECDHSQTDSLEDEEIEAFYKMLTQR). Asp153, Asn155, Asp157, Lys159, Glu164, Asp189, Ser191, Thr193, Ser195, and Glu200 together coordinate Ca(2+). The O-linked (GlcNAc) serine glycan is linked to Ser191. The O-linked (GlcNAc) threonine glycan is linked to Thr193. The PI-PLC X-box domain maps to 296-440 (QDMGQPLSHY…LKGKILLKGK (145 aa)). His311 is a catalytic residue. Residues Asn312, Glu341, and Asp343 each contribute to the Ca(2+) site. His356 is an active-site residue. Glu390 provides a ligand contact to Ca(2+). The substrate site is built by Lys438 and Lys440. At Thr457 the chain carries Phosphothreonine. Ser460 bears the Phosphoserine mark. The PI-PLC Y-box domain maps to 492-609 (LSDMVIYCKS…GYVLKPAFLR (118 aa)). The substrate site is built by Ser522 and Arg549. One can recognise a C2 domain in the interval 611-737 (PNGTFNPRAL…QGYRHVHLMS (127 aa)). Residues Ile651, Asp653, Asn677, Asp706, Tyr707, and Asp708 each coordinate Ca(2+).

As to quaternary structure, interacts with TGM2. Ca(2+) serves as cofactor. As to expression, strongly expressed in lung, liver and heart. Also expressed at least in pancreas, kidney, skeletal muscle, placenta and brain.

It carries out the reaction a 1,2-diacyl-sn-glycero-3-phospho-(1D-myo-inositol-4,5-bisphosphate) + H2O = 1D-myo-inositol 1,4,5-trisphosphate + a 1,2-diacyl-sn-glycerol + H(+). The catalysed reaction is a 1,2-diacyl-sn-glycero-3-phospho-(1D-myo-inositol) + H2O = 1D-myo-inositol 1-phosphate + a 1,2-diacyl-sn-glycerol + H(+). Its function is as follows. The production of the second messenger molecules diacylglycerol (DAG) and inositol 1,4,5-trisphosphate (IP3) is mediated by activated phosphatidylinositol-specific phospholipase C enzymes. Essential for trophoblast and placental development. Binds phosphatidylinositol 4,5-bisphosphate. The polypeptide is 1-phosphatidylinositol 4,5-bisphosphate phosphodiesterase delta-1 (Homo sapiens (Human)).